Consider the following 514-residue polypeptide: Peptide chain release factor 3 (514 aa).

One can recognise a tr-type G domain in the interval 8-268; that stretch reads KKRRTFAIIS…SFLAFAPEPH (261 aa). GTP contacts are provided by residues 17–24, 85–89, and 139–142; these read SHPDAGKT, DTPGH, and NKLD.

The protein belongs to the TRAFAC class translation factor GTPase superfamily. Classic translation factor GTPase family. PrfC subfamily.

The protein resides in the cytoplasm. In terms of biological role, increases the formation of ribosomal termination complexes and stimulates activities of RF-1 and RF-2. It binds guanine nucleotides and has strong preference for UGA stop codons. It may interact directly with the ribosome. The stimulation of RF-1 and RF-2 is significantly reduced by GTP and GDP, but not by GMP. The protein is Peptide chain release factor 3 of Streptococcus mutans serotype c (strain ATCC 700610 / UA159).